A 447-amino-acid polypeptide reads, in one-letter code: Sporulation protein YpeB (447 aa).

It belongs to the YpeB family.

Required for spore cortex hydrolysis during germination. Appears to be required for either expression, localization, activation or function of SleB. This chain is Sporulation protein YpeB, found in Oceanobacillus iheyensis (strain DSM 14371 / CIP 107618 / JCM 11309 / KCTC 3954 / HTE831).